Consider the following 698-residue polypeptide: Probable microcin-H47 secretion/processing ATP-binding protein MchF (698 aa).

Residues 26-145 (QTETAECGLA…RYFTGIALEV (120 aa)) enclose the Peptidase C39 domain. Cys-32 is a catalytic residue. Helical transmembrane passes span 33-53 (GLAC…LISL), 90-110 (LGAL…VVLV), 289-311 (TCVV…MLLY), 315-337 (LTWI…YGYY), and 397-417 (LLFG…ILWL). One can recognise an ABC transmembrane type-1 domain in the interval 176 to 458 (LAKIFCLSVV…LTSFLLQLRI (283 aa)). The region spanning 492–698 (LETTDLSYRY…LRTVDRIISI (207 aa)) is the ABC transporter domain. Residue 526 to 533 (GASGAGKT) coordinates ATP.

Belongs to the ABC transporter superfamily.

Its subcellular location is the cell membrane. Functionally, probably involved, in conjunction with MchE, in the secretion of microcin H47. This Escherichia coli protein is Probable microcin-H47 secretion/processing ATP-binding protein MchF (mchF).